We begin with the raw amino-acid sequence, 27 residues long: Putative phosphoglycerate kinase (27 aa).

It belongs to the phosphoglycerate kinase family. In terms of assembly, monomer. Requires Mg(2+) as cofactor.

It carries out the reaction (2R)-3-phosphoglycerate + ATP = (2R)-3-phospho-glyceroyl phosphate + ADP. In Pinus strobus (Eastern white pine), this protein is Putative phosphoglycerate kinase.